A 123-amino-acid chain; its full sequence is Methicillin resistance regulatory protein MecI (123 aa).

A DNA-binding region (H-T-H motif) is located at residues 7–71 (EISSAEWEVM…KDNKIFQYYS (65 aa)). Residues 74–123 (EESDIKYKTSKNFINKVYKGGFNSLVLNFVEKEDLSQDEIEELRNILNKK) form an important for dimerization region.

The protein belongs to the BlaI transcriptional regulatory family. As to quaternary structure, monomer and homodimer. In terms of processing, upon exposure to beta-lactams, proteolytic cleavage at a single site impairs dimerization and abolishes repressor activity.

Its subcellular location is the cytoplasm. Its function is as follows. Transcriptional repressor that constitutively blocks the transcription of the gene for the penicillin-binding protein MecA. Binds palindromic DNA with the sequence 5'-TACA-[AT]-N-TGTA-3'. Regulates genes involved in antibiotic resistance. Binds DNA as a dimer. The sequence is that of Methicillin resistance regulatory protein MecI (mecI) from Staphylococcus aureus (strain N315).